The chain runs to 161 residues: MSLFNTNAYLPVVIQPHELNLDLMDNIKKAVINKYLHKETSGFMAKKIQIVEDTPMPLAELVNNEIVVHVTCNIDYKYYKVGDIVSGILTITDESDISVVCSDLICKIRSDSGTVSYDNSKYCFIKNGKVYANESTVTVMLKEAQSGMESSFVFLGNIIEK.

It belongs to the poxviridae DNA-directed RNA polymerase 18 kDa subunit family. In terms of assembly, the DNA-dependent RNA polymerase used for intermediate and late genes expression consists of eight subunits 147 kDa, 133 kDa, 35 kDa, 30 kDa, 22 kDa, 19 kDa, 18 kDa and 7 kDa totalling more than 500 kDa in mass. The same holoenzyme, with the addition of the transcription-specificity factor RAP94, is used for early gene expression.

It is found in the virion. The catalysed reaction is RNA(n) + a ribonucleoside 5'-triphosphate = RNA(n+1) + diphosphate. In terms of biological role, part of the DNA-dependent RNA polymerase which catalyzes the transcription of viral DNA into RNA using the four ribonucleoside triphosphates as substrates. Responsible for the transcription of early, intermediate and late genes. DNA-dependent RNA polymerase associates with the early transcription factor (ETF) thereby allowing the early genes transcription. Late transcription, and probably also intermediate transcription, require newly synthesized RNA polymerase. The chain is DNA-directed RNA polymerase 18 kDa subunit (RPO18) from Vertebrata (FPV).